The following is a 451-amino-acid chain: 2-succinylbenzoate--CoA ligase (451 aa).

Belongs to the ATP-dependent AMP-binding enzyme family. MenE subfamily.

The enzyme catalyses 2-succinylbenzoate + ATP + CoA = 2-succinylbenzoyl-CoA + AMP + diphosphate. The protein operates within quinol/quinone metabolism; 1,4-dihydroxy-2-naphthoate biosynthesis; 1,4-dihydroxy-2-naphthoate from chorismate: step 5/7. Its pathway is quinol/quinone metabolism; menaquinone biosynthesis. Its function is as follows. Converts 2-succinylbenzoate (OSB) to 2-succinylbenzoyl-CoA (OSB-CoA). This Escherichia coli (strain K12) protein is 2-succinylbenzoate--CoA ligase.